Here is a 407-residue protein sequence, read N- to C-terminus: Cation efflux system protein CusB (407 aa).

The N-terminal stretch at 1 to 28 (MKKIALIIGSMIAGGIISAAGFTWFAKA) is a signal peptide.

Belongs to the membrane fusion protein (MFP) (TC 8.A.1) family. As to quaternary structure, the cus efflux system is composed of CusA, CusB, CusC and CusF.

In terms of biological role, part of a cation efflux system that mediates resistance to copper and silver. The protein is Cation efflux system protein CusB (cusB) of Escherichia coli O157:H7.